The chain runs to 399 residues: Phosphopentomutase (399 aa).

Positions 10, 296, 301, 337, 338, and 349 each coordinate Mn(2+).

The protein belongs to the phosphopentomutase family. Mn(2+) serves as cofactor.

Its subcellular location is the cytoplasm. The catalysed reaction is 2-deoxy-alpha-D-ribose 1-phosphate = 2-deoxy-D-ribose 5-phosphate. It catalyses the reaction alpha-D-ribose 1-phosphate = D-ribose 5-phosphate. It participates in carbohydrate degradation; 2-deoxy-D-ribose 1-phosphate degradation; D-glyceraldehyde 3-phosphate and acetaldehyde from 2-deoxy-alpha-D-ribose 1-phosphate: step 1/2. Isomerase that catalyzes the conversion of deoxy-ribose 1-phosphate (dRib-1-P) and ribose 1-phosphate (Rib-1-P) to deoxy-ribose 5-phosphate (dRib-5-P) and ribose 5-phosphate (Rib-5-P), respectively. The chain is Phosphopentomutase from Idiomarina loihiensis (strain ATCC BAA-735 / DSM 15497 / L2-TR).